We begin with the raw amino-acid sequence, 108 residues long: Small ribosomal subunit protein bS16 (108 aa).

The protein belongs to the bacterial ribosomal protein bS16 family.

In Orientia tsutsugamushi (strain Boryong) (Rickettsia tsutsugamushi), this protein is Small ribosomal subunit protein bS16.